Reading from the N-terminus, the 229-residue chain is Probable transmembrane reductase CYB561D1 (229 aa).

Over 1–24 (MHSMEVGLVPAPAREPRLTRWLRR) the chain is Cytoplasmic. One can recognise a Cytochrome b561 domain in the interval 22 to 224 (LRRGSGILAH…HQISSSYLPR (203 aa)). A helical transmembrane segment spans residues 25-45 (GSGILAHLIALGFTIFLTVLS). Over 46 to 53 (RPGTSLFS) the chain is Lumenal. Residues 54-74 (WHPVFMALAFCLCMAEAILLF) traverse the membrane as a helical segment. Heme b is bound at residue His-55. Residues 75-91 (SPEHSLFFFCSRKTRIR) lie on the Cytoplasmic side of the membrane. Residues 92–112 (LHWAGQTMAILCAVLGLGFII) form a helical membrane-spanning segment. Positions 93 and 127 each coordinate heme b. The Lumenal portion of the chain corresponds to 113–128 (SSKIRSEMSHLVSWHS). Residues 129-149 (WIGALTLLATGGQALCGLCLL) form a helical membrane-spanning segment. Residues 150 to 169 (CPRAARVSRVARLKLYHLTC) are Cytoplasmic-facing. His-166 serves as a coordination point for heme b. A helical membrane pass occupies residues 170–190 (GLVVYLMATVTVLLGMYSVWF). Over 191-193 (QAQ) the chain is Lumenal. The helical transmembrane segment at 194 to 214 (IKGTAWYLCLGLPLYPALVIM) threads the bilayer. The Cytoplasmic portion of the chain corresponds to 215–229 (HQISSSYLPRKKVEI).

The cofactor is heme b.

The protein resides in the membrane. It carries out the reaction monodehydro-L-ascorbate radical(out) + L-ascorbate(in) = monodehydro-L-ascorbate radical(in) + L-ascorbate(out). The catalysed reaction is Fe(3+)(out) + L-ascorbate(in) = monodehydro-L-ascorbate radical(in) + Fe(2+)(out) + H(+). Its function is as follows. Probable transmembrane reductase that may use ascorbate as an electron donor and transfer electrons across membranes to reduce monodehydro-L-ascorbate radical and iron cations Fe(3+) in another cellular compartment. This is Probable transmembrane reductase CYB561D1 from Mus musculus (Mouse).